The sequence spans 464 residues: Protein FAM90A14 (464 aa).

3 disordered regions span residues 1 to 42 (MMAR…DPRL), 70 to 389 (PATL…HDGA), and 411 to 437 (APSF…SEAP). Composition is skewed to basic and acidic residues over residues 74 to 89 (GKKE…KPRV) and 97 to 114 (NKDK…DPQR). Low complexity predominate over residues 180-197 (LASLSPLRKASLSSSSSL).

It belongs to the FAM90 family.

The protein is Protein FAM90A14 of Homo sapiens (Human).